A 134-amino-acid chain; its full sequence is MAIRPVYRPTIVKKRTKKFIRHQSDRYSKLKRNWRKPKGIDNRVRRRFKGQYLMPNIGYGSNKKTRHMLPTGFRKVLVHNVKELEVLMMQNRKFCAEIAHGGSSKKRKSIVERAQQLSIRVTYASARLRSQENE.

The protein belongs to the eukaryotic ribosomal protein eL32 family.

The chain is Large ribosomal subunit protein eL32 (RpL32) from Apis mellifera (Honeybee).